Reading from the N-terminus, the 533-residue chain is Subtilisin-like protease 1 (533 aa).

Residues 1 to 19 form the signal peptide; the sequence is MGVFRFISISLAAVSAANA. Positions 20 to 116 are excised as a propeptide; the sequence is AQILSMPHAQ…VEPDTIISVH (97 aa). Residues 34–115 form the Inhibitor I9 domain; sequence SYIVMMKDDT…FVEPDTIISV (82 aa). The region spanning 126 to 400 is the Peptidase S8 domain; the sequence is SWGLARISNP…NVLINNGGAK (275 aa). Catalysis depends on charge relay system residues Asp-158 and His-190. A disordered region spans residues 175 to 198; that stretch reads GSNQVNDGDDRDGSGHGTHTSGTM. 2 N-linked (GlcNAc...) asparagine glycosylation sites follow: Asn-233 and Asn-251. A compositionally biased stretch (polar residues) spans 282–294; sequence NDNQDAQSSSPAS. The interval 282 to 312 is disordered; sequence NDNQDAQSSSPASEPSVCTVGSSAEDDSRSS. Ser-345 acts as the Charge relay system in catalysis. Residues 378-394 show a composition bias toward polar residues; the sequence is TSSITDAGPGTPTNVLI. The segment at 378–512 is disordered; the sequence is TSSITDAGPG…YPGGDNFDFD (135 aa). Positions 405–470 are enriched in pro residues; sequence NPNPAPSPSP…FPGEPFPGEP (66 aa). A compositionally biased stretch (low complexity) spans 471–487; sequence FPGESFPGESFPGESAP. Positions 488–502 are enriched in pro residues; that stretch reads APAPMPPSPQHPHTP.

The protein belongs to the peptidase S8 family.

It is found in the secreted. Functionally, secreted subtilisin-like serine protease with keratinolytic activity that contributes to pathogenicity. This is Subtilisin-like protease 1 (SUB1) from Arthroderma benhamiae (strain ATCC MYA-4681 / CBS 112371) (Trichophyton mentagrophytes).